The sequence spans 357 residues: MKFVDEAEIQVIAGNGGDGCVSFRREKFIPLGGPDGGDGGDGGSVWLVADENLNTLVDFRHERIFKAQRGVNGMGQQMYGKAGQDKIISVPIGTVVINVQTDEVIGDMVRHGDRLLVAKGGTGGLGNMHFKSSINRAPRQARPGELGEERTLKLELKLLADIGMLGFPNVGKSTFIRAVSAATPKVADYPFTTLYPNLGVVKIEAYSSFVIADVPGLIEGAADGVGLGTQFLRHLQRTKLLLHMVDISATADAYGNEKVGVGLLPIEQVRKLEIELERHDPALLDKPRWLVLNKADLMPQEDAQDLAEALIAELHWTAPWYLVSAVSREGTWPIMKSAMTLFEHQREVAAEQSVSSR.

The Obg domain maps to 1 to 159 (MKFVDEAEIQ…RTLKLELKLL (159 aa)). The 184-residue stretch at 160-343 (ADIGMLGFPN…IMKSAMTLFE (184 aa)) folds into the OBG-type G domain. GTP-binding positions include 166-173 (GFPNVGKS), 191-195 (FTTLY), 213-216 (DVPG), 293-296 (NKAD), and 324-326 (SAV). The Mg(2+) site is built by serine 173 and threonine 193.

Belongs to the TRAFAC class OBG-HflX-like GTPase superfamily. OBG GTPase family. As to quaternary structure, monomer. Mg(2+) is required as a cofactor.

The protein localises to the cytoplasm. In terms of biological role, an essential GTPase which binds GTP, GDP and possibly (p)ppGpp with moderate affinity, with high nucleotide exchange rates and a fairly low GTP hydrolysis rate. Plays a role in control of the cell cycle, stress response, ribosome biogenesis and in those bacteria that undergo differentiation, in morphogenesis control. This is GTPase Obg from Xylella fastidiosa (strain M12).